Reading from the N-terminus, the 190-residue chain is Xanthine phosphoribosyltransferase 1 (190 aa).

2 residues coordinate xanthine: L20 and N27. 129 to 133 (AQGCA) is a binding site for 5-phospho-alpha-D-ribose 1-diphosphate. K157 serves as a coordination point for xanthine.

This sequence belongs to the purine/pyrimidine phosphoribosyltransferase family. Xpt subfamily. Homodimer.

The protein resides in the cytoplasm. It carries out the reaction XMP + diphosphate = xanthine + 5-phospho-alpha-D-ribose 1-diphosphate. Its pathway is purine metabolism; XMP biosynthesis via salvage pathway; XMP from xanthine: step 1/1. Functionally, converts the preformed base xanthine, a product of nucleic acid breakdown, to xanthosine 5'-monophosphate (XMP), so it can be reused for RNA or DNA synthesis. The chain is Xanthine phosphoribosyltransferase 1 from Clostridium perfringens (strain ATCC 13124 / DSM 756 / JCM 1290 / NCIMB 6125 / NCTC 8237 / Type A).